The chain runs to 356 residues: Phenylalanine--tRNA ligase alpha subunit (356 aa).

Glu258 lines the Mg(2+) pocket.

The protein belongs to the class-II aminoacyl-tRNA synthetase family. Phe-tRNA synthetase alpha subunit type 1 subfamily. In terms of assembly, tetramer of two alpha and two beta subunits. The cofactor is Mg(2+).

It localises to the cytoplasm. It catalyses the reaction tRNA(Phe) + L-phenylalanine + ATP = L-phenylalanyl-tRNA(Phe) + AMP + diphosphate + H(+). This is Phenylalanine--tRNA ligase alpha subunit from Macrococcus caseolyticus (strain JCSC5402) (Macrococcoides caseolyticum).